The following is a 239-amino-acid chain: Large ribosomal subunit protein eL32 (239 aa).

Composition is skewed to acidic residues over residues 1 to 12 (MSDENDTPEELA) and 67 to 91 (VEAD…ADVE). 2 disordered regions span residues 1 to 23 (MSDE…SKAE) and 64 to 178 (GLEV…HPSG). Residues 92–113 (TELRARGLTEKTPDLSEDEQRL) show a composition bias toward basic and acidic residues. The span at 130–155 (YHKKKRTPTSWRRPKGTLSKQRRGIK) shows a compositional bias: basic residues.

This sequence belongs to the eukaryotic ribosomal protein eL32 family.

The chain is Large ribosomal subunit protein eL32 (rpl32e) from Halobacterium salinarum (strain ATCC 700922 / JCM 11081 / NRC-1) (Halobacterium halobium).